Reading from the N-terminus, the 86-residue chain is uncharacterized protein (86 aa).

Residues 1-25 (MNLRKILLSSALSLGMLVSAAPVLA) form the signal peptide.

This is an uncharacterized protein from Bacillus subtilis (strain 168).